The following is a 613-amino-acid chain: Ribosome-associated molecular chaperone SSB2 (613 aa).

The residue at position 2 (A2) is an N-acetylalanine. A nucleotide binding domain (NBD) region spans residues 2 to 391; it reads AEGVFQGAIG…ILTGQSTSDE (390 aa). 16 to 18 is a binding site for ATP; the sequence is TTY. At T47 the chain carries Phosphothreonine. ATP contacts are provided by residues K73, 205-207, 271-278, and G342; these read GGT and ERAKRTLS. The interval 392–402 is inter-domain linker; it reads TKDLLLLDVAP. Residues 403–613 are substrate binding domain (SBD); sequence LSLGVGMQGD…RVVTKAMSSR (211 aa). The Contributes to ribosome binding motif lies at 428 to 430; the sequence is KRR. Residue T431 is modified to Phosphothreonine. Residues 516–612 are lid domain (SBDalpha); the sequence is SEEIEKMVNQ…KRVVTKAMSS (97 aa). The Nuclear export signal signature appears at 574–582; sequence IEAALSDAL. Positions 601–613 are required for interaction with ribosomes; the sequence is GLKRVVTKAMSSR.

The protein belongs to the heat shock protein 70 family. Ssb-type Hsp70 subfamily. In terms of assembly, binds to ribosomes. Binds close to the ribosomal tunnel exit via contacts with both ribosomal proteins RPL35, RPL39 and RPL19, and rRNA. Directly interacts with nascent polypeptides. This interaction is dependent on the ribosome-associated complex (RAC). Interacts with SSE1.

The protein resides in the cytoplasm. The catalysed reaction is ATP + H2O = ADP + phosphate + H(+). In terms of biological role, ribosome-bound, Hsp70-type chaperone that assists in the cotranslational folding of newly synthesized proteins in the cytosol. Stimulates folding by interacting with nascent chains, binding to short, largely hydrophobic sequences exposed by unfolded proteins, thereby stabilizing longer, more slowly translated, and aggregation-prone nascent polypeptides and domains that cannot fold stably until fully synthesized. The Hsp70-protein substrate interaction depends on ATP-binding and on allosteric regulation between the NBD and the SBD. The ATP-bound state is characterized by a fast exchange rate of substrate (low affinity state), while in the ADP-bound state exchange is much slower (high affinity state). During the Hsp70 cycle, the chaperone switches between the ATP-bound state (open conformation) and the ADP-bound state (closed conformation) by major conformational rearrangements involving mainly the lid domain. Ssb cooperates with a specific Hsp40/Hsp70 co-chaperone termed the ribosome-associated complex (RAC), which stimulates the ATPase activity of the ribosome-associated pool of Ssbs and switches it to the high affinity substrate binding state. Hsp110 chaperone SSE1 and FES1 act as nucleotide exchange factors that cause substrate release. In Saccharomyces cerevisiae (strain ATCC 204508 / S288c) (Baker's yeast), this protein is Ribosome-associated molecular chaperone SSB2.